A 330-amino-acid polypeptide reads, in one-letter code: Short chain dehydrogenase yanD (330 aa).

5 residues coordinate NADP(+): K57, D86, N113, Y204, and K208. Residue Y204 is the Proton donor of the active site. K208 (lowers pKa of active site Tyr) is an active-site residue.

It belongs to the short-chain dehydrogenases/reductases (SDR) family.

It participates in secondary metabolite biosynthesis; terpenoid biosynthesis. Its function is as follows. Short chain dehydrogenase; part of the gene cluster that mediates the biosynthesis of yanuthone D, a fungal isoprenoid epoxycyclohexenone that acts as an antibiotic against fungi and bacteria. The first step of the pathway is the synthesis of 6-methylsalicylic acid (6-MSA) by the polyketide synthase yanA. 6-MSA is then converted to m-cresol by the decarboxylase yanB. The cytochrome P450 monooxygenase yanC then catalyzes the oxidation of m-cresol to toluquinol. Epoxidation of toluquinol is then performed by the short chain dehydrogenase yanD, with the help of yanE, and a further prenylation by yanG leads to 7-deacetoxyyanuthone A. The next step is the hydroxylation of C-22 of 7-deacetoxyyanuthone A by the cytochrome P450 monooxygenase yanH to yield 22-deacetylyanuthone A. O-Mevalon transferase yanI then attaches mevalon to the hydroxyl group of 22-deacetylyanuthone A to produce yanuthone E. Finally, the FAD-dependent monooxygenase yanF oxidizes the hydroxyl group at C15 of yanuthone E to form yanuthone D. Furthermore, several branching points in the pathway lead to the production of yanuthones F and G from 7-deacetoxyyanuthone A; yanuthones H and I from 22-deacetylyanuthone A; and yanuthone J from yanuthone E. YanD is also involved in the synthesis of yanuthone X1 which does not have 6-methylsalicylic acid (6-MSA) as precursor. This is Short chain dehydrogenase yanD from Aspergillus niger (strain ATCC 1015 / CBS 113.46 / FGSC A1144 / LSHB Ac4 / NCTC 3858a / NRRL 328 / USDA 3528.7).